A 119-amino-acid chain; its full sequence is Basic phospholipase A2 acanthin-1 (119 aa).

Cystine bridges form between Cys11–Cys71, Cys27–Cys118, Cys29–Cys45, Cys44–Cys99, Cys51–Cys92, Cys60–Cys85, and Cys78–Cys90. Ca(2+)-binding residues include Tyr28, Gly30, and Gly32. Residue His48 is part of the active site. Asp49 contacts Ca(2+). Residue Asp93 is part of the active site.

Ca(2+) serves as cofactor. Expressed by the venom gland.

The protein localises to the secreted. The enzyme catalyses a 1,2-diacyl-sn-glycero-3-phosphocholine + H2O = a 1-acyl-sn-glycero-3-phosphocholine + a fatty acid + H(+). Its function is as follows. Snake venom phospholipase A2 (PLA2) that potently inhibits ADP-(IC(50)=10 nM) and collagen-induced (IC(50)=7 nM) platelet aggregation when tested on human whole blood. PLA2 catalyzes the calcium-dependent hydrolysis of the 2-acyl groups in 3-sn-phosphoglycerides. This chain is Basic phospholipase A2 acanthin-1, found in Acanthophis antarcticus (Common death adder).